The following is a 54-amino-acid chain: MAKKNRNKQQQEMQQQQQQHQAEFANEFAEGSSAEQARQQQQKAAGKRQKKNQQ.

The interval 1–54 (MAKKNRNKQQQEMQQQQQQHQAEFANEFAEGSSAEQARQQQQKAAGKRQKKNQQ) is disordered. Low complexity-rich tracts occupy residues 10 to 21 (QQEMQQQQQQHQ) and 29 to 44 (AEGS…QQKA). The span at 45-54 (AGKRQKKNQQ) shows a compositional bias: basic residues.

The protein belongs to the gamma-type SASP family.

Functionally, SASP are proteins degraded in the first minutes of spore germination and provide amino acids for both new protein synthesis and metabolism. These proteins may be involved in dormant spore's high resistance to UV light. This is Small, acid-soluble spore protein gamma-type (sspA) from Alkalihalophilus pseudofirmus (strain ATCC BAA-2126 / JCM 17055 / OF4) (Bacillus pseudofirmus).